The chain runs to 148 residues: Aspartate carbamoyltransferase regulatory chain (148 aa).

Zn(2+) is bound by residues Cys-106, Cys-111, Cys-134, and Cys-137.

It belongs to the PyrI family. Contains catalytic and regulatory chains. Requires Zn(2+) as cofactor.

In terms of biological role, involved in allosteric regulation of aspartate carbamoyltransferase. The polypeptide is Aspartate carbamoyltransferase regulatory chain (Methanococcus maripaludis (strain C6 / ATCC BAA-1332)).